Consider the following 446-residue polypeptide: Tryptophan dimethylallyltransferase (446 aa).

Residues 83–84 (IL) and E92 contribute to the L-tryptophan site. Substrate-binding residues include R103, K189, and Y191. Y193 and R246 together coordinate L-tryptophan. 5 residues coordinate substrate: R259, K261, Y263, Q345, and Y347.

The protein belongs to the tryptophan dimethylallyltransferase family. Homodimer.

It catalyses the reaction L-tryptophan + dimethylallyl diphosphate = 4-(3-methylbut-2-enyl)-L-tryptophan + diphosphate. The protein operates within alkaloid biosynthesis; ergot alkaloid biosynthesis. Functionally, tryptophan dimethylallyltransferase; part of the gene cluster that mediates the biosynthesis of fungal ergot alkaloid. DmaW catalyzes the first step of ergot alkaloid biosynthesis by condensing dimethylallyl diphosphate (DMAP) and tryptophan to form 4-dimethylallyl-L-tryptophan. The second step is catalyzed by the methyltransferase easF that methylates 4-dimethylallyl-L-tryptophan in the presence of S-adenosyl-L-methionine, resulting in the formation of 4-dimethylallyl-L-abrine. The catalase easC and the FAD-dependent oxidoreductase easE then transform 4-dimethylallyl-L-abrine to chanoclavine-I which is further oxidized by easD in the presence of NAD(+), resulting in the formation of chanoclavine-I aldehyde. Chanoclavine-I aldehyde is the precursor of ergoamides and ergopeptines in Clavicipitaceae, and clavine-type alcaloids such as fumiclavine in Trichocomaceae. However, the metabolites downstream of chanoclavine-I aldehyde in Arthrodermataceae have not been identified yet. The polypeptide is Tryptophan dimethylallyltransferase (Arthroderma otae (strain ATCC MYA-4605 / CBS 113480) (Microsporum canis)).